The following is a 160-amino-acid chain: Cyclic pyranopterin monophosphate synthase (160 aa).

Substrate-binding positions include 73-75 and 110-111; these read LCH and ME. Aspartate 125 is an active-site residue.

This sequence belongs to the MoaC family. Homohexamer; trimer of dimers.

It carries out the reaction (8S)-3',8-cyclo-7,8-dihydroguanosine 5'-triphosphate = cyclic pyranopterin phosphate + diphosphate. It participates in cofactor biosynthesis; molybdopterin biosynthesis. Functionally, catalyzes the conversion of (8S)-3',8-cyclo-7,8-dihydroguanosine 5'-triphosphate to cyclic pyranopterin monophosphate (cPMP). This Pseudomonas aeruginosa (strain LESB58) protein is Cyclic pyranopterin monophosphate synthase.